The primary structure comprises 23 residues: Caerulein precursor fragment BM2 (23 aa).

In terms of tissue distribution, expressed by the skin glands.

It is found in the secreted. Antimicrobial peptide. The chain is Caerulein precursor fragment BM2 from Xenopus boumbaensis (Mawa clawed frog).